Reading from the N-terminus, the 446-residue chain is Cytochrome P450 monooxygenase ptmP (446 aa).

A helical transmembrane segment spans residues 19 to 39 (VTVIWILMALVLLAYLILPNP). Cys385 contacts heme. Asn430 carries an N-linked (GlcNAc...) asparagine glycan.

This sequence belongs to the cytochrome P450 family. Heme is required as a cofactor.

Its subcellular location is the membrane. Its pathway is secondary metabolite biosynthesis. Its function is as follows. Cytochrome P450 monooxygenase; part of the gene cluster that mediates the biosynthesis of the indole diterpenes penitrems. The geranylgeranyl diphosphate (GGPP) synthase ptmG catalyzes the first step in penitrem biosynthesis via conversion of farnesyl pyrophosphate and isopentyl pyrophosphate into geranylgeranyl pyrophosphate (GGPP). Condensation of indole-3-glycerol phosphate with GGPP by the prenyl transferase ptmC then forms 3-geranylgeranylindole (3-GGI). Epoxidation by the FAD-dependent monooxygenase ptmM leads to a epoxidized-GGI that is substrate of the terpene cyclase ptmB for cyclization to yield paspaline. Paspaline is subsequently converted to 13-desoxypaxilline by the cytochrome P450 monooxygenase ptmP, the latter being then converted to paxilline by the cytochrome P450 monooxygenase ptmQ. Paxilline is converted to beta-paxitriol via C-10 ketoreduction by the short-chain dehydrogenase ptmH which can be monoprenylated at the C-20 by the indole diterpene prenyltransferase ptmD. A two-step elimination (acetylation and elimination) process performed by the O-acetyltransferase ptmV and ptmI leads to the production of the prenylated form of penijanthine. The FAD-linked oxidoreductase ptmO then converts the prenylated form of penijanthine into PC-M5 which is in turn transformed into PC-M4 by the aromatic dimethylallyltransferase ptmE. Five sequential oxidative transformations performed by the cytochrome P450 monooxygenases ptmK, ptmU, ptmL, ptmN and ptmJ yield the various penitrem compounds. PtmK, ptmU and ptmM are involved in the formation of the key bicyclic ring of penitrem C via the formation of the intermediates secopenitrem D and penitrem D. PtmL catalyzes the epoxidation of penitrem D and C to yield penitrem B and F, respectively. PtmJ catalyzes the last benzylic hydroxylation to convert penitrem B to prenitrem E and penitrem F to penitrem A. The polypeptide is Cytochrome P450 monooxygenase ptmP (Penicillium ochrochloron).